The chain runs to 256 residues: Ribonuclease 3 (256 aa).

Residues 3-125 (LEALQQRLGY…IFGAVFLDGG (123 aa)) form the RNase III domain. E38 serves as a coordination point for Mg(2+). The active site involves D42. Positions 111 and 114 each coordinate Mg(2+). E114 is a catalytic residue. Positions 152 to 222 (DAKTLLQEYL…AKLALEEAHR (71 aa)) constitute a DRBM domain. A disordered region spans residues 227-256 (LVKRSRAERTGKTRKQATPPDPQLSLRLKE).

The protein belongs to the ribonuclease III family. Homodimer. It depends on Mg(2+) as a cofactor.

Its subcellular location is the cytoplasm. It carries out the reaction Endonucleolytic cleavage to 5'-phosphomonoester.. Functionally, digests double-stranded RNA. Involved in the processing of primary rRNA transcript to yield the immediate precursors to the large and small rRNAs (23S and 16S). Processes some mRNAs, and tRNAs when they are encoded in the rRNA operon. Processes pre-crRNA and tracrRNA of type II CRISPR loci if present in the organism. The protein is Ribonuclease 3 of Ralstonia nicotianae (strain ATCC BAA-1114 / GMI1000) (Ralstonia solanacearum).